Consider the following 337-residue polypeptide: 4-hydroxyproline 2-epimerase 2 (337 aa).

Residue Cys90 is the Proton acceptor of the active site. Residues 91 to 92, His223, and Asp249 contribute to the substrate site; that span reads GH. The Proton donor role is filled by Cys253. 254–255 is a substrate binding site; the sequence is GT.

It belongs to the proline racemase family.

It catalyses the reaction trans-4-hydroxy-L-proline = cis-4-hydroxy-D-proline. Catalyzes the epimerization of trans-4-hydroxy-L-proline (t4LHyp) to cis-4-hydroxy-D-proline (c4DHyp). Is likely involved in a degradation pathway that converts t4LHyp to alpha-ketoglutarate. Can also catalyze the epimerization of trans-3-hydroxy-L-proline (t3LHyp) to cis-3-hydroxy-D-proline (c3DHyp), albeit with 170-fold lower efficiency. Displays no proline racemase activity. The chain is 4-hydroxyproline 2-epimerase 2 from Brucella anthropi (strain ATCC 49188 / DSM 6882 / CCUG 24695 / JCM 21032 / LMG 3331 / NBRC 15819 / NCTC 12168 / Alc 37) (Ochrobactrum anthropi).